The chain runs to 402 residues: Septin CDC11 (402 aa).

Residue Met-1 is modified to N-acetylmethionine. Ser-4 carries the post-translational modification Phosphoserine. The Basic motif motif lies at 14-21 (RKRKTLKK). A Septin-type G domain is found at 21 to 307 (KSINFSIMII…ENYRTEALSG (287 aa)). The segment at 31–38 (GESGSGRS) is G1 motif. Residue 31–38 (GESGSGRS) coordinates GTP. The tract at residues 89–92 (DTPN) is G3 motif. Residues 171–174 (SKAD) form a G4 motif region. GTP is bound by residues 172–180 (KADSLTPKE) and Gly-233. Residues 318-376 (AKQEISESDYLMKEEQIKLEEERLRKFEERVHQDLINKRKELLERENELKEIEKRLLAE) are a coiled coil. Ser-394 is subject to Phosphoserine; by CDC28. The residue at position 395 (Ser-395) is a Phosphoserine; by GIN4.

This sequence belongs to the TRAFAC class TrmE-Era-EngA-EngB-Septin-like GTPase superfamily. Septin GTPase family. As to quaternary structure, component of the septin complex which consists of CDC3, CDC10, CDC11, CDC12 and probably SEP7. The purified septin complex appeared to have a stoichiometry of 2 CDC3, 1 to 2 CDC10, 1 CDC11, 2 CDC12, and 1 or none SEP7 subunit. Interacts with HSL1. Post-translationally, hyphal induction causes immediate phosphorylation at Ser-395 by GIN4 and at Ser-394 by CDC28-CCN1. GIN4 phosphorylation at Ser-395 primes CDC11 for further phosphorylation by CDC28-CCN1. CDC28-HGC1 then maintains CDC11 phosphorylation throughout hyphal growth. Ser-4 is also phosphorylated in yeast cells but not hyphal cells. Met-1 is acetylated.

It is found in the bud neck. In terms of biological role, septins are GTPases involved in cytokinesis that assemble early in the cell cycle as a patch at the incipient bud site and form a ring before bud emergence, which transforms into an hour-glass shaped collar of cortical filaments that spans both sides of the mother-bud neck. This collar persists until just before cytokinesis, when it splits into two rings that occupy opposite sides of the neck. The septins at the bud neck serve as a structural scaffold that recruits different components involved in diverse processes at specific stages during the cell cycle. Many proteins bind asymmetrically to the septin collar. The septin assembly is regulated by protein kinase GIN4. Septins are also involved in cell morphogenesis, chlamydospores morphogenesis, bud site selection, chitin deposition, cell cycle regulation, cell compartmentalization, and spore wall formation. CDC11 is required for the correct localization of SEC3 at bud tips and bud necks. Plays a key role in invasive growth and virulence. This chain is Septin CDC11 (CDC11), found in Candida albicans (strain SC5314 / ATCC MYA-2876) (Yeast).